The chain runs to 56 residues: Small ribosomal subunit protein eS31 (56 aa).

Residues Cys-28, Cys-31, Cys-46, and Cys-49 each coordinate Zn(2+). The segment at Cys-28–Cys-49 adopts a C4-type zinc-finger fold.

It belongs to the eukaryotic ribosomal protein eS31 family. In terms of assembly, part of the 30S ribosomal subunit. Zn(2+) is required as a cofactor.

This chain is Small ribosomal subunit protein eS31, found in Thermococcus gammatolerans (strain DSM 15229 / JCM 11827 / EJ3).